A 107-amino-acid polypeptide reads, in one-letter code: Putative ATP synthase subunit f, mitochondrial (107 aa).

The protein belongs to the ATPase F chain family. F-type ATPases have 2 components, CF(1) - the catalytic core - and CF(0) - the membrane proton channel. CF(0) seems to have nine subunits: a, b, c, d, e, f, g, F6 and 8 (or A6L).

Its subcellular location is the mitochondrion membrane. In terms of biological role, mitochondrial membrane ATP synthase (F(1)F(0) ATP synthase or Complex V) produces ATP from ADP in the presence of a proton gradient across the membrane which is generated by electron transport complexes of the respiratory chain. F-type ATPases consist of two structural domains, F(1) - containing the extramembraneous catalytic core and F(0) - containing the membrane proton channel, linked together by a central stalk and a peripheral stalk. During catalysis, ATP synthesis in the catalytic domain of F(1) is coupled via a rotary mechanism of the central stalk subunits to proton translocation. Part of the complex F(0) domain. Minor subunit located with subunit a in the membrane. This Drosophila melanogaster (Fruit fly) protein is Putative ATP synthase subunit f, mitochondrial.